The sequence spans 462 residues: O-methyltransferase CTB2 (462 aa).

D289 is an S-adenosyl-L-methionine binding site. H340 functions as the Proton acceptor in the catalytic mechanism.

This sequence belongs to the class I-like SAM-binding methyltransferase superfamily. Cation-independent O-methyltransferase family. COMT subfamily.

Its pathway is mycotoxin biosynthesis. Functionally, O-methyltransferase; part of the gene cluster that mediates the biosynthesis of cercosporin, a light-activated, non-host-selective toxin. The perylenequinone chromophore of cercosporin absorbs light energy to attain an electronically-activated triplet state and produces active oxygen species such as the hydroxyl radical, superoxide, hydrogen peroxide or singlet oxygen upon reaction with oxygen molecules. These reactive oxygen species cause damage to various cellular components including lipids, proteins and nucleic acids. The first step of cercosporin biosynthesis is performed by the polyketide synthase CTB1 which catalyzes the formation of nor-toralactone. The starter unit acyltransferase (SAT) domain of CTB1 initiates polyketide extension by the selective utilization of acetyl-CoA, which is elongated to the heptaketide in the beta-ketoacyl synthase (KS) domain by successive condensations with six malonyl units introduced by the malonyl acyltransferase (MAT) domain. The product template (PT) domain catalyzes C4-C9 and C2-C11 aldol cyclizations and dehydrations to a trihydroxynaphthalene, which is thought to be delivered to the thioesterase (TE) domain for product release. The bifunctional enzyme CTB3 then methylates nor-toralactone to toralactone before conducting an unusual oxidative aromatic ring opening. The O-methyltransferase CTB2 further methylates the nascent OH-6 of the CBT3 product, blocking further oxidation at this site before the reductase CTB6 reduces the 2-oxopropyl ketone at position C7, giving naphthalene. The FAD-dependent monooxygenase CTB5 in concert with the multicopper oxidase CTB12 are responsible for homodimerization of naphthalene with CTB7 installing the dioxepine moiety, finally producing cercosporin. The fasciclin domain-containing protein CTB11 might act with CTB5 and CTB12 whereas the roles of CTB9 and CTB10 have still to be elucidated. This chain is O-methyltransferase CTB2, found in Cercospora beticola (Sugarbeet leaf spot fungus).